Here is a 234-residue protein sequence, read N- to C-terminus: 2,3-bisphosphoglycerate-dependent phosphoglycerate mutase (234 aa).

Residues 10–17, 23–24, Arg-62, 89–92, Lys-100, 116–117, and 186–187 contribute to the substrate site; these read RHGSSIWN, TG, ERHY, RR, and GN. His-11 functions as the Tele-phosphohistidine intermediate in the catalytic mechanism. The Proton donor/acceptor role is filled by Glu-89.

The protein belongs to the phosphoglycerate mutase family. BPG-dependent PGAM subfamily. Homodimer.

It catalyses the reaction (2R)-2-phosphoglycerate = (2R)-3-phosphoglycerate. The protein operates within carbohydrate degradation; glycolysis; pyruvate from D-glyceraldehyde 3-phosphate: step 3/5. Functionally, catalyzes the interconversion of 2-phosphoglycerate and 3-phosphoglycerate. The polypeptide is 2,3-bisphosphoglycerate-dependent phosphoglycerate mutase (Wigglesworthia glossinidia brevipalpis).